The sequence spans 192 residues: Na(+)-translocating ferredoxin:NAD(+) oxidoreductase complex subunit A (192 aa).

6 consecutive transmembrane segments (helical) span residues 4–24 (IFIM…FLGI), 38–58 (VGMG…TYVV), 71–91 (LQTI…EMII), 101–121 (ALGV…VALI), 133–153 (IFNG…FAGI), and 169–189 (FPIA…FSGM).

It belongs to the NqrDE/RnfAE family. As to quaternary structure, the complex is composed of six subunits: RnfA, RnfB, RnfC, RnfD, RnfE and RnfG.

The protein resides in the cell membrane. The catalysed reaction is 2 reduced [2Fe-2S]-[ferredoxin] + Na(+)(in) + NAD(+) + H(+) = 2 oxidized [2Fe-2S]-[ferredoxin] + Na(+)(out) + NADH. Functionally, part of a membrane-bound complex that couples electron transfer with translocation of ions across the membrane. Couples electron transfer from reduced ferredoxin to NAD(+) with electrogenic movement of Na(+) out of the cell. Involved in caffeate respiration. This Acetobacterium woodii (strain ATCC 29683 / DSM 1030 / JCM 2381 / KCTC 1655 / WB1) protein is Na(+)-translocating ferredoxin:NAD(+) oxidoreductase complex subunit A.